The chain runs to 367 residues: Ribosomal lysine N-methyltransferase 5 (367 aa).

Residues tryptophan 110, 170-172 (GAG), aspartate 192, tryptophan 256, and methionine 288 contribute to the S-adenosyl-L-methionine site.

This sequence belongs to the class I-like SAM-binding methyltransferase superfamily. RKM5 family.

Its function is as follows. S-adenosyl-L-methionine-dependent protein-lysine N-methyltransferase that monomethylates 60S ribosomal protein L1 (RPL1A and RPL1B) at 'Lys-46'. In Saccharomyces cerevisiae (strain JAY291) (Baker's yeast), this protein is Ribosomal lysine N-methyltransferase 5 (RKM5).